Consider the following 65-residue polypeptide: Small ribosomal subunit protein bS21A (65 aa).

It belongs to the bacterial ribosomal protein bS21 family.

This Francisella tularensis subsp. holarctica (strain LVS) protein is Small ribosomal subunit protein bS21A.